The following is a 786-amino-acid chain: Endonuclease MutS2 (786 aa).

335-342 (GPNTGGKT) contacts ATP. The Smr domain occupies 711 to 786 (LDLRGERFEN…GLGVTVVELK (76 aa)).

It belongs to the DNA mismatch repair MutS family. MutS2 subfamily. Homodimer. Binds to stalled ribosomes, contacting rRNA.

Endonuclease that is involved in the suppression of homologous recombination and thus may have a key role in the control of bacterial genetic diversity. Functionally, acts as a ribosome collision sensor, splitting the ribosome into its 2 subunits. Detects stalled/collided 70S ribosomes which it binds and splits by an ATP-hydrolysis driven conformational change. Acts upstream of the ribosome quality control system (RQC), a ribosome-associated complex that mediates the extraction of incompletely synthesized nascent chains from stalled ribosomes and their subsequent degradation. Probably generates substrates for RQC. The polypeptide is Endonuclease MutS2 (Bacillus cereus (strain ATCC 10987 / NRS 248)).